A 174-amino-acid polypeptide reads, in one-letter code: ATP-dependent protease subunit HslV (174 aa).

The active site involves Thr-2. Residues Gly-157, Cys-160, and Thr-163 each coordinate Na(+).

Belongs to the peptidase T1B family. HslV subfamily. A double ring-shaped homohexamer of HslV is capped on each side by a ring-shaped HslU homohexamer. The assembly of the HslU/HslV complex is dependent on binding of ATP.

The protein resides in the cytoplasm. The catalysed reaction is ATP-dependent cleavage of peptide bonds with broad specificity.. Its activity is regulated as follows. Allosterically activated by HslU binding. Functionally, protease subunit of a proteasome-like degradation complex believed to be a general protein degrading machinery. In Shewanella denitrificans (strain OS217 / ATCC BAA-1090 / DSM 15013), this protein is ATP-dependent protease subunit HslV.